We begin with the raw amino-acid sequence, 238 residues long: Zinc finger protein ZAT6 (238 aa).

Polar residues predominate over residues 1–15 (MALETLTSPRLSSPM). The tract at residues 1–42 (MALETLTSPRLSSPMPTLFQDSALGFHGSKGKRSKRSRSEFD) is disordered. The Nuclear localization signal signature appears at 30-38 (KGKRSKRSR). 2 C2H2-type zinc fingers span residues 89-111 (YKCS…KASH) and 148-170 (HVCS…KRCH). The disordered stretch occupies residues 175-202 (NGGGVSSSVSNSEDVGSTSHVSSGHRGF). The span at 180–193 (SSSVSNSEDVGSTS) shows a compositional bias: low complexity.

The protein localises to the nucleus. In terms of biological role, probable transcription factor that regulates root development and phosphate (Pi) acquisition and homeostasis. Probably acts as a repressor of primary root growth and regulates Pi homeostasis through the control of root architecture. In Arabidopsis thaliana (Mouse-ear cress), this protein is Zinc finger protein ZAT6 (ZAT6).